The sequence spans 311 residues: Coproporphyrin III ferrochelatase (311 aa).

Residues Y12, R29, 45 to 46 (RY), S53, and Y124 contribute to the Fe-coproporphyrin III site. The Fe(2+) site is built by H182 and E263.

This sequence belongs to the ferrochelatase family.

The protein localises to the cytoplasm. It catalyses the reaction Fe-coproporphyrin III + 2 H(+) = coproporphyrin III + Fe(2+). Its pathway is porphyrin-containing compound metabolism; protoheme biosynthesis. In terms of biological role, involved in coproporphyrin-dependent heme b biosynthesis. Catalyzes the insertion of ferrous iron into coproporphyrin III to form Fe-coproporphyrin III. In Bacillus mycoides (strain KBAB4) (Bacillus weihenstephanensis), this protein is Coproporphyrin III ferrochelatase.